A 96-amino-acid polypeptide reads, in one-letter code: Essential MCU regulator, mitochondrial (96 aa).

Residues 1 to 34 constitute a mitochondrion transit peptide; that stretch reads MIVSRLTFPLQAAKLVARKAAGNPSNSIIQRRHM. Residues 52 to 72 traverse the membrane as a helical segment; that stretch reads PFGLFAIFCAVIPGLFIGATI.

It belongs to the SMDT1/EMRE family.

The protein resides in the mitochondrion inner membrane. Functionally, essential regulatory subunit of the mitochondrial calcium uniporter (mcu) channel, a protein that mediates calcium uptake into mitochondria. This Drosophila pseudoobscura pseudoobscura (Fruit fly) protein is Essential MCU regulator, mitochondrial.